A 357-amino-acid chain; its full sequence is Prostaglandin D2 receptor-like (357 aa).

Residues 1-20 (MNESYRCQAATWVERGSSAT) are Extracellular-facing. Asparagine 2 carries an N-linked (GlcNAc...) asparagine glycan. The chain crosses the membrane as a helical span at residues 21 to 41 (MGGVLFSAGLLGNLLALVLLA). At 42–57 (RSGLGSCRPGPLHPPP) the chain is on the cytoplasmic side. Residues 58–78 (SVFYVLVCGLTVTHLLGKCLI) traverse the membrane as a helical segment. Topologically, residues 79-106 (SPMVLAAYAQNRSLKELLPASGNQLCEA) are extracellular. N-linked (GlcNAc...) asparagine glycosylation is present at asparagine 89. Cysteines 104 and 182 form a disulfide. The helical transmembrane segment at 107–127 (FAFLMSFFGLASTLQLLAMAL) threads the bilayer. Residues 128 to 149 (ECWLSLGHPFFYQRHITARRGV) are Cytoplasmic-facing. Residues 150–170 (LVAPVAGAFSLAFCALPFAGF) traverse the membrane as a helical segment. The Extracellular portion of the chain corresponds to 171–194 (GKFVQYCPGTWCFIQMIHKKRSFS). The chain crosses the membrane as a helical span at residues 195 to 215 (VIGFSVLYSSLMALLVLATVV). Topologically, residues 216-261 (CNLGAMSNLYAMHRRQRHHPRRCSRDRAQSGSDYRHGSPNPLEELD) are cytoplasmic. Residues 262–282 (HFVLLALTTVLFTMCSLPLIY) traverse the membrane as a helical segment. At 283 to 306 (RAYYGAFKLVDRADGDSEDLQALR) the chain is on the extracellular side. A helical transmembrane segment spans residues 307-327 (FLSVISIVDPWIFIIFRTSVF). The Cytoplasmic portion of the chain corresponds to 328–357 (RMLFHKAFTRPLIYRNWCSHSWQTNMESTL).

It belongs to the G-protein coupled receptor 1 family. Strongly expressed in eye and gastrointestinal tract (GIT), moderately in the brain and oviduct and weakly in the epididymis. In the eye, expressed in the epithelium of the iris and ciliary body and in photoreceptor cells of the retina. In the brain, expressed in leptomeninges, choroid plexus and spinal cord (sensory and motor neurons of the dorsal and ventral horns). In the stomach, expressed in the mucous-secreting goblet cells and the columnar epithelium. Expressed in platelets.

Its subcellular location is the cell membrane. In terms of biological role, receptor for prostaglandin D2 (PGD2). The activity of this receptor is mainly mediated by G(s) proteins that stimulate adenylate cyclase, resulting in an elevation of intracellular cAMP. A mobilization of calcium is also observed, but without formation of inositol 1,4,5-trisphosphate. The sequence is that of Prostaglandin D2 receptor-like (Ptgdrl) from Rattus norvegicus (Rat).